A 198-amino-acid chain; its full sequence is MAALTAEHFAALQSLLKASSKDVVRQLCQESFSSSALGLKKLLDVTCSSLSVTQEEAEELLQALHRLTRLVAFRDLSSAEAILALFPENFHQNLKNLLTKIILEHVSTWRTEAQANQISLPRLVDLDWRVDIKTSSDSISRMAVPTCLLQMKIQEDPSLCGDKPSISAVTVELSKETLDTMLDGLGRIRDQLSAVASK.

An N-acetylalanine modification is found at A2. The COMM domain maps to 122-196; it reads RLVDLDWRVD…RIRDQLSAVA (75 aa).

The protein belongs to the COMM domain-containing protein 9 family. Component of the commander complex consisting of the CCC subcomplex and the retriever subcomplex. Component of the CCC (COMMD/CCDC22/CCDC93) subcomplex consisting of COMMD1, COMMD2, COMMD3, COMMD4, COMMD5, COMMD6, COMMD7, COMMD8, COMMD9, COMMD10, CCDC22 and CCDC93; within the complex forms a heterodimer with COMMD7. Interacts with RELB and NFKB1/p105. Interacts with CCDC22, CCDC93, SCNN1B, CUL1. In terms of tissue distribution, ubiquitous.

The protein localises to the nucleus. The protein resides in the cytoplasmic vesicle. In terms of biological role, scaffold protein in the commander complex that is essential for endosomal recycling of transmembrane cargos; the commander complex is composed of the CCC subcomplex and the retriever subcomplex. May modulate activity of cullin-RING E3 ubiquitin ligase (CRL) complexes. May down-regulate activation of NF-kappa-B. Modulates Na(+) transport in epithelial cells by regulation of apical cell surface expression of amiloride-sensitive sodium channel (ENaC) subunits. This Homo sapiens (Human) protein is COMM domain-containing protein 9 (COMMD9).